We begin with the raw amino-acid sequence, 194 residues long: dCTP deaminase (194 aa).

DCTP is bound by residues 110–115 (RSSLAR), Asp-128, 136–138 (VLE), Tyr-171, Lys-178, and Gln-182. The Proton donor/acceptor role is filled by Glu-138. The segment at 169-194 (RPYNKRDNAKYKDQTSAVGSRISGEN) is disordered. Basic and acidic residues predominate over residues 170 to 181 (PYNKRDNAKYKD). Positions 182-194 (QTSAVGSRISGEN) are enriched in polar residues.

Belongs to the dCTP deaminase family. Homotrimer.

It catalyses the reaction dCTP + H2O + H(+) = dUTP + NH4(+). It functions in the pathway pyrimidine metabolism; dUMP biosynthesis; dUMP from dCTP (dUTP route): step 1/2. Functionally, catalyzes the deamination of dCTP to dUTP. In Marinomonas sp. (strain MWYL1), this protein is dCTP deaminase.